A 339-amino-acid chain; its full sequence is Undecaprenyl-phosphate 4-deoxy-4-formamido-L-arabinose transferase (339 aa).

2 helical membrane-spanning segments follow: residues Leu-235–Val-255 and Phe-270–Leu-290.

This sequence belongs to the glycosyltransferase 2 family.

It is found in the cell inner membrane. The catalysed reaction is UDP-4-deoxy-4-formamido-beta-L-arabinose + di-trans,octa-cis-undecaprenyl phosphate = 4-deoxy-4-formamido-alpha-L-arabinopyranosyl di-trans,octa-cis-undecaprenyl phosphate + UDP. The protein operates within glycolipid biosynthesis; 4-amino-4-deoxy-alpha-L-arabinose undecaprenyl phosphate biosynthesis; 4-amino-4-deoxy-alpha-L-arabinose undecaprenyl phosphate from UDP-4-deoxy-4-formamido-beta-L-arabinose and undecaprenyl phosphate: step 1/2. It participates in bacterial outer membrane biogenesis; lipopolysaccharide biosynthesis. Functionally, catalyzes the transfer of 4-deoxy-4-formamido-L-arabinose from UDP to undecaprenyl phosphate. The modified arabinose is attached to lipid A and is required for resistance to polymyxin and cationic antimicrobial peptides. This chain is Undecaprenyl-phosphate 4-deoxy-4-formamido-L-arabinose transferase, found in Pseudomonas fluorescens (strain ATCC BAA-477 / NRRL B-23932 / Pf-5).